Here is a 1133-residue protein sequence, read N- to C-terminus: Tudor domain-containing protein 1 (1133 aa).

Residues 1–55 (MNELRMPNLVRPNRPLREPASRPLTPSRFPVPSQPDAAYTGSAAGSTGLGSPGPA) form a disordered region. Residues 37 to 46 (AAYTGSAAGS) show a composition bias toward low complexity. Zn(2+) is bound by residues Cys75, Cys78, Cys86, Cys89, Cys95, Cys99, His107, and Cys111. The segment at 75–111 (CHYCGQQGIFRCKGCKKTPYCSVDCQREDWKAHRHMC) adopts an MYND-type zinc-finger fold. Tudor domains are found at residues 204 to 264 (VPCV…TKPY), 435 to 494 (RPAP…LLAL), and 656 to 714 (VPKV…LLKL). The tract at residues 786-836 (SGNLSKDPVRSPTTKQEDLRGGDQSQALTPASNDTQAVCEDGKSEEEPSEV) is disordered. Polar residues predominate over residues 808–821 (DQSQALTPASNDTQ). Residues 904–962 (RPVPGAACCAQFSVDKIWYRAIILEVGEAEMSVVYADYGNSEKVPVSQILPIPTRLLQL) enclose the Tudor 4 domain. The disordered stretch occupies residues 1036–1104 (KGSPLPDASQ…QATSVHDLQG (69 aa)). Polar residues predominate over residues 1079 to 1088 (VTNTQESTPQ).

This sequence belongs to the TDRD1 family. Interacts with MAEL. Interacts with PIWIL1, PIWIL2 and PIWIL4 (when methylated on arginine residues). In terms of tissue distribution, expressed in both the ovary and testis in the adult. Present in migrating primordial germ cells (PGCs) and also in the germ cells in both the gonadal primordia (stage 33), and in the developing ovary and testis.

The protein resides in the cytoplasm. Functionally, plays a central role during spermatogenesis by participating in the repression transposable elements and preventing their mobilization, which is essential for the germline integrity. Acts via the piRNA metabolic process, which mediates the repression of transposable elements during meiosis by forming complexes composed of piRNAs and Piwi proteins and governs the methylation and subsequent repression of transposons. Required for the localization of Piwi proteins to the meiotic nuage. Involved in the piRNA metabolic process by ensuring the entry of correct transcripts into the normal piRNA pool and limiting the entry of cellular transcripts into the piRNA pathway. May act by allowing the recruitment of piRNA biogenesis or loading factors that ensure the correct entry of transcripts and piRNAs into Piwi proteins. This Oryzias latipes (Japanese rice fish) protein is Tudor domain-containing protein 1 (tdrd1).